We begin with the raw amino-acid sequence, 165 residues long: Mediator of RNA polymerase II transcription subunit 10 (165 aa).

Disordered stretches follow at residues 54-81 (SLHT…DPAL) and 143-165 (LRGE…RERG). A compositionally biased stretch (polar residues) spans 62-77 (TASTTAPNQYQSTNPN).

This sequence belongs to the Mediator complex subunit 10 family. As to quaternary structure, component of the Mediator complex.

The protein resides in the nucleus. Functionally, component of the Mediator complex, a coactivator involved in the regulated transcription of nearly all RNA polymerase II-dependent genes. Mediator functions as a bridge to convey information from gene-specific regulatory proteins to the basal RNA polymerase II transcription machinery. Mediator is recruited to promoters by direct interactions with regulatory proteins and serves as a scaffold for the assembly of a functional preinitiation complex with RNA polymerase II and the general transcription factors. The polypeptide is Mediator of RNA polymerase II transcription subunit 10 (nut2) (Emericella nidulans (strain FGSC A4 / ATCC 38163 / CBS 112.46 / NRRL 194 / M139) (Aspergillus nidulans)).